Consider the following 244-residue polypeptide: Mast cell protease 2 (244 aa).

The signal sequence occupies residues 1–18; that stretch reads MQALLFLMALLLPSGAGA. The propeptide at 19 to 20 is activation peptide; the sequence is EE. Positions 21–242 constitute a Peptidase S1 domain; sequence IIGGVEAKPH…YLPWIYKVLK (222 aa). N44 carries an N-linked (GlcNAc...) asparagine glycan. Residues C50 and C66 are joined by a disulfide bond. Catalysis depends on charge relay system residues H65 and D109. Cystine bridges form between C143–C208 and C174–C187. The active-site Charge relay system is S202.

Belongs to the peptidase S1 family. Granzyme subfamily. Mucosal mast cells.

The polypeptide is Mast cell protease 2 (Mcpt2) (Mus musculus (Mouse)).